Here is a 141-residue protein sequence, read N- to C-terminus: Large ribosomal subunit protein uL11 (141 aa).

It belongs to the universal ribosomal protein uL11 family. Part of the ribosomal stalk of the 50S ribosomal subunit. Interacts with L10 and the large rRNA to form the base of the stalk. L10 forms an elongated spine to which L12 dimers bind in a sequential fashion forming a multimeric L10(L12)X complex. Post-translationally, one or more lysine residues are methylated.

Forms part of the ribosomal stalk which helps the ribosome interact with GTP-bound translation factors. The chain is Large ribosomal subunit protein uL11 from Nostoc sp. (strain PCC 7120 / SAG 25.82 / UTEX 2576).